Consider the following 299-residue polypeptide: NAD kinase (299 aa).

Residue aspartate 75 is the Proton acceptor of the active site. Residues 75-76 (DG), 149-150 (ND), arginine 177, aspartate 179, 190-195 (TAYALS), alanine 214, and glutamine 248 contribute to the NAD(+) site.

This sequence belongs to the NAD kinase family. A divalent metal cation is required as a cofactor.

The protein resides in the cytoplasm. The catalysed reaction is NAD(+) + ATP = ADP + NADP(+) + H(+). Involved in the regulation of the intracellular balance of NAD and NADP, and is a key enzyme in the biosynthesis of NADP. Catalyzes specifically the phosphorylation on 2'-hydroxyl of the adenosine moiety of NAD to yield NADP. This is NAD kinase from Burkholderia thailandensis (strain ATCC 700388 / DSM 13276 / CCUG 48851 / CIP 106301 / E264).